The sequence spans 235 residues: Glucosamine-6-phosphate deaminase (235 aa).

Catalysis depends on D62, which acts as the Proton acceptor; for enolization step. The active-site For ring-opening step is N128. The Proton acceptor; for ring-opening step role is filled by H130. The active-site For ring-opening step is the E135.

It belongs to the glucosamine/galactosamine-6-phosphate isomerase family. NagB subfamily.

It carries out the reaction alpha-D-glucosamine 6-phosphate + H2O = beta-D-fructose 6-phosphate + NH4(+). Its pathway is amino-sugar metabolism; N-acetylneuraminate degradation; D-fructose 6-phosphate from N-acetylneuraminate: step 5/5. In terms of biological role, catalyzes the reversible isomerization-deamination of glucosamine 6-phosphate (GlcN6P) to form fructose 6-phosphate (Fru6P) and ammonium ion. The chain is Glucosamine-6-phosphate deaminase from Streptococcus pneumoniae (strain JJA).